Here is a 116-residue protein sequence, read N- to C-terminus: TSGKAAKKAGKAQKSITKGDKKKRKESYSIYIYKVLKQVHPDTGISSKAMSIMNSFVNDIFERIAAEASRLAHYNKRSTITSREIQTAVRLLLPGELAKHAVSEGTKAVTKYTSSK.

Positions Thr1 to Lys11 are enriched in basic residues. The segment at Thr1–Lys25 is disordered. N6-acetyllysine occurs at positions 4, 11, and 14. A glycan (O-linked (GlcNAc) serine) is linked at Ser103. A Glycyl lysine isopeptide (Lys-Gly) (interchain with G-Cter in ubiquitin) cross-link involves residue Lys111.

In terms of assembly, the nucleosome is a histone octamer containing two molecules each of H2A, H2B, H3 and H4 assembled in one H3-H4 heterotetramer and two H2A-H2B heterodimers. The octamer wraps approximately 147 bp of DNA. In terms of processing, monoubiquitination gives a specific tag for epigenetic transcriptional activation and is also prerequisite for histone H3 'Lys-4' and 'Lys-79' methylation. Post-translationally, glcNAcylation at Ser-103 promotes monoubiquitination of Lys-111. It fluctuates in response to extracellular glucose, and associates with transcribed genes.

The protein resides in the nucleus. The protein localises to the chromosome. Core component of nucleosome. Nucleosomes wrap and compact DNA into chromatin, limiting DNA accessibility to the cellular machineries which require DNA as a template. Histones thereby play a central role in transcription regulation, DNA repair, DNA replication and chromosomal stability. DNA accessibility is regulated via a complex set of post-translational modifications of histones, also called histone code, and nucleosome remodeling. Its function is as follows. A mixture of histones H2B and H4 has antimicrobial activity against the Gram-positive bacterium M.luteus. This chain is Histone H2B, found in Penaeus vannamei (Whiteleg shrimp).